A 239-amino-acid chain; its full sequence is Probable transcriptional regulatory protein Veis_4238 (239 aa).

The interval 1-22 is disordered; that stretch reads MAGHSKWANIQHRKGRQDEKRG.

The protein belongs to the TACO1 family.

Its subcellular location is the cytoplasm. The polypeptide is Probable transcriptional regulatory protein Veis_4238 (Verminephrobacter eiseniae (strain EF01-2)).